A 267-amino-acid chain; its full sequence is Mlc titration factor A (267 aa).

Zn(2+) contacts are provided by H111, H148, H152, and E211.

The protein belongs to the MtfA family. As to quaternary structure, interacts with Mlc. The cofactor is Zn(2+).

It is found in the cytoplasm. Its function is as follows. Involved in the modulation of the activity of the glucose-phosphotransferase system (glucose-PTS). Interacts with the transcriptional repressor Mlc, preventing its interaction with DNA and leading to the modulation of expression of genes regulated by Mlc, including ptsG, which encodes the PTS system glucose-specific EIICB component. Shows zinc-dependent metallopeptidase activity. The sequence is that of Mlc titration factor A from Yersinia enterocolitica serotype O:8 / biotype 1B (strain NCTC 13174 / 8081).